Here is a 298-residue protein sequence, read N- to C-terminus: tRNA pseudouridine synthase A (298 aa).

Asp56 serves as the catalytic Nucleophile. Tyr125 contacts substrate.

The protein belongs to the tRNA pseudouridine synthase TruA family. Homodimer.

It catalyses the reaction uridine(38/39/40) in tRNA = pseudouridine(38/39/40) in tRNA. Functionally, formation of pseudouridine at positions 38, 39 and 40 in the anticodon stem and loop of transfer RNAs. The chain is tRNA pseudouridine synthase A from Bifidobacterium animalis subsp. lactis (strain AD011).